A 78-amino-acid polypeptide reads, in one-letter code: Large ribosomal subunit protein bL28 (78 aa).

The protein belongs to the bacterial ribosomal protein bL28 family.

The polypeptide is Large ribosomal subunit protein bL28 (Flavobacterium psychrophilum (strain ATCC 49511 / DSM 21280 / CIP 103535 / JIP02/86)).